Consider the following 356-residue polypeptide: Butyrate kinase (356 aa).

It belongs to the acetokinase family.

The protein localises to the cytoplasm. The catalysed reaction is butanoate + ATP = butanoyl phosphate + ADP. It participates in lipid metabolism; butanoate metabolism. Its function is as follows. Catalyzes the conversion of butyryl-CoA through butyryl phosphate to butyrate. The polypeptide is Butyrate kinase (buk) (Clostridium perfringens (strain ATCC 13124 / DSM 756 / JCM 1290 / NCIMB 6125 / NCTC 8237 / Type A)).